Here is a 281-residue protein sequence, read N- to C-terminus: Transformer-2 protein homolog alpha (281 aa).

Positions 1–116 (MSDVEENNFE…TGSRANPDPN (116 aa)) are disordered. Ser2 is modified (N-acetylserine). 2 positions are modified to phosphoserine: Ser2 and Ser14. Thr24 is modified (phosphothreonine). Residues 51 to 82 (RSRSKSRSRSRRHSHRRYTRSRSHSHRRRSRS) are compositionally biased toward basic residues. A phosphoserine mark is found at Ser80, Ser82, and Ser84. Position 86 is a phosphothreonine (Thr86). Positions 90 to 108 (RRRRSRSHSPMSNRRRHTG) are enriched in basic residues. Residues Ser94 and Ser96 each carry the phosphoserine modification. An RRM domain is found at 117 to 195 (TCLGVFGLSL…RRIRVDYSIT (79 aa)). Lys196 participates in a covalent cross-link: Glycyl lysine isopeptide (Lys-Gly) (interchain with G-Cter in SUMO2). The linker stretch occupies residues 196–223 (KRAHTPTPGIYMGRPTHSGGGGGGGGGG). Positions 199 to 281 (HTPTPGIYMG…RSRSYSPRRY (83 aa)) are disordered. A phosphothreonine mark is found at Thr200 and Thr202. Residues 213 to 231 (SGGGGGGGGGGGGGGGGGG) are compositionally biased toward gly residues. Arg233 is subject to Omega-N-methylarginine. Residues 233–257 (RRRDSYYDRGYDRGYDRYEDYDYRR) show a composition bias toward basic and acidic residues. Ser237 carries the phosphoserine modification. Residues 267-281 (YRSRSRSRSYSPRRY) are compositionally biased toward basic residues.

Belongs to the splicing factor SR family. As to quaternary structure, binds to A3 enhancer proteins SRp75, SRp55, SRp40 and SRp30. Interacts with ILDR1 (via C-terminus) and ILDR2. Phosphorylated in the RS domains. As to expression, expressed in inner ear.

Its subcellular location is the nucleus. Its function is as follows. Sequence-specific RNA-binding protein which participates in the control of pre-mRNA splicing. The polypeptide is Transformer-2 protein homolog alpha (Mus musculus (Mouse)).